The following is a 176-amino-acid chain: Glyoxalase domain-containing protein RDO1 (176 aa).

The 120-residue stretch at 53–172 folds into the VOC domain; it reads SLDHLVITCH…DNNLIELSSY (120 aa). The active-site Proton donor/acceptor is Glu-168.

The protein belongs to the glyoxalase I family.

Its pathway is secondary metabolite biosynthesis. Functionally, glyoxalase domain-containing protein; part of the gene cluster that mediates the biosynthesis of itaconic acid and 2-hydroxyparaconate. Cis-aconitate is secreted by the mitochondrial tricarboxylate transporter MTT1. In the cytosol cis-aconitate is converted into trans-aconitate via isomerization by the aconitate-delta-isomerase ADI1. Decarboxylation of trans-aconitate by the trans-aconitate decarboxylase TAD1 then leads then to the production of itaconic acid. The cytochrome P450 monooxygenase CYP3 further converts itaconate to 2-hydroxyparaconate via oxidation of the double bond, leading to a transient epoxide, which can subsequently be lactonized to produce 2-hydroxyparaconate. Secretion of itaconate and possibly 2-hydroxyparaconate into the medium is mediated by the major facilitator ITP1. The glyoxalase domain-containing protein RDO1 is not involved in the biosynthesis of itaconate and 2-hydroxyparaconate, however, it might play a role in the further conversion of 2-hydroxyparaconate to itatartarate. This chain is Glyoxalase domain-containing protein RDO1, found in Mycosarcoma maydis (Corn smut fungus).